We begin with the raw amino-acid sequence, 220 residues long: Imidazoleglycerol-phosphate dehydratase (220 aa).

Substrate contacts are provided by residues Glu-14, 64–72 (HMIHALAKH), 90–94 (HHTTE), Arg-116, and Arg-138. His-64, His-90, His-91, and Glu-94 together coordinate Mn(2+). Residues His-162, His-186, His-187, and Glu-190 each coordinate Mn(2+). Substrate is bound by residues 186 to 194 (HHRSESAFK) and 214 to 216 (STK).

Belongs to the imidazoleglycerol-phosphate dehydratase family. Mn(2+) serves as cofactor.

It carries out the reaction D-erythro-1-(imidazol-4-yl)glycerol 3-phosphate = 3-(imidazol-4-yl)-2-oxopropyl phosphate + H2O. The protein operates within amino-acid biosynthesis; L-histidine biosynthesis; L-histidine from 5-phospho-alpha-D-ribose 1-diphosphate: step 6/9. The protein is Imidazoleglycerol-phosphate dehydratase of Saccharomyces cerevisiae (strain ATCC 204508 / S288c) (Baker's yeast).